Consider the following 130-residue polypeptide: Probable 15 kDa heat shock protein (130 aa).

Residues 21-130 (ERVRILAPRV…LTKKIEVRSE (110 aa)) form the sHSP domain.

The protein belongs to the small heat shock protein (HSP20) family.

The polypeptide is Probable 15 kDa heat shock protein (hsp15) (Leptospira interrogans serogroup Icterohaemorrhagiae serovar Lai (strain 56601)).